The following is a 1213-amino-acid chain: DNA-directed RNA polymerase subunit beta (1213 aa).

Residues Arg1153–Lys1213 are disordered. Basic and acidic residues predominate over residues Met1171–Asp1198.

It belongs to the RNA polymerase beta chain family. As to quaternary structure, the RNAP catalytic core consists of 2 alpha, 1 beta, 1 beta' and 1 omega subunit. When a sigma factor is associated with the core the holoenzyme is formed, which can initiate transcription.

The catalysed reaction is RNA(n) + a ribonucleoside 5'-triphosphate = RNA(n+1) + diphosphate. Its function is as follows. DNA-dependent RNA polymerase catalyzes the transcription of DNA into RNA using the four ribonucleoside triphosphates as substrates. The chain is DNA-directed RNA polymerase subunit beta from Lactobacillus acidophilus (strain ATCC 700396 / NCK56 / N2 / NCFM).